The sequence spans 516 residues: Probable rhamnogalacturonase B (516 aa).

An N-terminal signal peptide occupies residues 1 to 21; sequence MRLHAFTLLSLLGLVPSFAAA. A disulfide bond links cysteine 42 and cysteine 68. The N-linked (GlcNAc...) asparagine glycan is linked to asparagine 145. Aspartate 219 acts as the Proton donor in catalysis. A disulfide bridge connects residues cysteine 221 and cysteine 238. Residue asparagine 239 is glycosylated (N-linked (GlcNAc...) asparagine). Histidine 294 is a catalytic residue. N-linked (GlcNAc...) asparagine glycosylation is present at asparagine 321. 2 cysteine pairs are disulfide-bonded: cysteine 344–cysteine 350 and cysteine 372–cysteine 381. The tract at residues 462–516 is disordered; sequence ETPAAASRSEQVVQGASQETSQPAPESAGPVRSVPTGGNRPSRHRHGHHHFWIAA. The segment covering 469–485 has biased composition (polar residues); that stretch reads RSEQVVQGASQETSQPA. Over residues 502-516 the composition is skewed to basic residues; sequence PSRHRHGHHHFWIAA.

The protein belongs to the glycosyl hydrolase 28 family.

It localises to the secreted. The catalysed reaction is Endohydrolysis of alpha-D-GalA-(1-&gt;2)-alpha-L-Rha glycosidic bond in the rhamnogalacturonan I backbone with initial inversion of anomeric configuration releasing oligosaccharides with beta-D-GalA at the reducing end.. Pectinolytic enzymes consist of four classes of enzymes: pectine lyase, polygalacturonase, pectin methylesterase and rhamnogalacturonase. Hydrolyzes alpha-D-galacturonopyranosyl-(1,2)-alpha-L-rhamnopyranosyl linkages in the backbone of the hairy regions of pectins. This is Probable rhamnogalacturonase B (rhgB) from Neosartorya fischeri (strain ATCC 1020 / DSM 3700 / CBS 544.65 / FGSC A1164 / JCM 1740 / NRRL 181 / WB 181) (Aspergillus fischerianus).